Reading from the N-terminus, the 178-residue chain is MTGYPDVAAFDLDYTIWPCYCDTHLHGPFKPVKSSNGEVLTIICRDGYELTIYKDIPRILGDLKDNGVKLMTASRTWAPEIAQEILKIFKVKYAGVVTPLANLFDEFQWGERSKIGHLRDGLKDLYNTSDLKSKKICLFDDESRNKEVEKYGVKFVYVRDPENGPSWKLYQDYLSGKV.

Aspartate 11 (nucleophile) is an active-site residue. Aspartate 11 lines the Mg(2+) pocket. Residues leucine 12, aspartate 13, serine 74, and arginine 75 each contribute to the phosphate site. Aspartate 13 provides a ligand contact to Mg(2+). The Proton donor role is filled by aspartate 13. A substrate-binding site is contributed by arginine 75. Aspartate 141 is a binding site for Mg(2+).

This sequence belongs to the HAD-like hydrolase superfamily.

It is found in the cytoplasm. Its subcellular location is the nucleus. The catalysed reaction is O-phospho-L-tyrosyl-[protein] + H2O = L-tyrosyl-[protein] + phosphate. Its function is as follows. Magnesium-dependent phosphatase which may act as a tyrosine phosphatase. The protein is Putative magnesium-dependent phosphatase YER134C of Saccharomyces cerevisiae (strain ATCC 204508 / S288c) (Baker's yeast).